A 293-amino-acid chain; its full sequence is ATP synthase gamma chain (293 aa).

The protein belongs to the ATPase gamma chain family. As to quaternary structure, F-type ATPases have 2 components, CF(1) - the catalytic core - and CF(0) - the membrane proton channel. CF(1) has five subunits: alpha(3), beta(3), gamma(1), delta(1), epsilon(1). CF(0) has three main subunits: a, b and c.

It localises to the cell inner membrane. Its function is as follows. Produces ATP from ADP in the presence of a proton gradient across the membrane. The gamma chain is believed to be important in regulating ATPase activity and the flow of protons through the CF(0) complex. This chain is ATP synthase gamma chain, found in Psychrobacter arcticus (strain DSM 17307 / VKM B-2377 / 273-4).